A 1070-amino-acid chain; its full sequence is DNA-directed RNA polymerase subunit beta (1070 aa).

It belongs to the RNA polymerase beta chain family. As to quaternary structure, in plastids the minimal PEP RNA polymerase catalytic core is composed of four subunits: alpha, beta, beta', and beta''. When a (nuclear-encoded) sigma factor is associated with the core the holoenzyme is formed, which can initiate transcription.

The protein localises to the plastid. It is found in the chloroplast. The enzyme catalyses RNA(n) + a ribonucleoside 5'-triphosphate = RNA(n+1) + diphosphate. Its function is as follows. DNA-dependent RNA polymerase catalyzes the transcription of DNA into RNA using the four ribonucleoside triphosphates as substrates. This is DNA-directed RNA polymerase subunit beta from Phaseolus vulgaris (Kidney bean).